A 129-amino-acid polypeptide reads, in one-letter code: Aspartate 1-decarboxylase (129 aa).

Catalysis depends on Ser-25, which acts as the Schiff-base intermediate with substrate; via pyruvic acid. Ser-25 bears the Pyruvic acid (Ser) mark. Position 57 (Thr-57) interacts with substrate. Residue Tyr-58 is the Proton donor of the active site. Position 73-75 (73-75 (GAA)) interacts with substrate.

Belongs to the PanD family. Heterooctamer of four alpha and four beta subunits. Requires pyruvate as cofactor. Post-translationally, is synthesized initially as an inactive proenzyme, which is activated by self-cleavage at a specific serine bond to produce a beta-subunit with a hydroxyl group at its C-terminus and an alpha-subunit with a pyruvoyl group at its N-terminus.

It localises to the cytoplasm. It carries out the reaction L-aspartate + H(+) = beta-alanine + CO2. The protein operates within cofactor biosynthesis; (R)-pantothenate biosynthesis; beta-alanine from L-aspartate: step 1/1. Its function is as follows. Catalyzes the pyruvoyl-dependent decarboxylation of aspartate to produce beta-alanine. The protein is Aspartate 1-decarboxylase of Chlorobium chlorochromatii (strain CaD3).